We begin with the raw amino-acid sequence, 540 residues long: MTVEESKKRKLTDDVAIKQNEKKIKKDKKVKDKKDKKDKKDKKDKKEKKEKKEKKEKNDKKDKKDKKDKKAEQVDKLSETTEQPSKQVKIGAYVENEELSKQPQSVIDEFFKENEVSVEDPSKLNLRPLLAFNQISLDKEVQNEIAKFPKPTPIQAVSWPYLLSGKDVIGVAETGSGKTFAFGVPAINNLLTSSSKPKGIKVLVISPTRELASQIYDNLVLLTQKVGIDCCVVYGGVPKDDQRRQIAKSNVVVATPGRLLDLIEEGSVDLSPVDYMVLDEADRMLEKGFEEDIKRIIGQTKSKDRQTLMFTATWPKEVRELASTFMKEPVKVSIGNRDELSANKRITQIVEVVDPRSKERKLLDLLKKYQSGPKKNDKVLIFALYKKEASRVERNLNYNGYKVAAIHGDLSQQQRTQALNEFKSGKSNLLLATDVAARGLDIPNVKTVINLTFPLTVEDYVHRIGRTGRAGQTGTAHTLFTEQEKHLAGGLVNVLNGANQPVPEDLIKFGTHTKRKEHGAYGAFFKDIDMSKKPKKITFD.

Residues 1–35 (MTVEESKKRKLTDDVAIKQNEKKIKKDKKVKDKKD) are compositionally biased toward basic and acidic residues. Residues 1–89 (MTVEESKKRK…TTEQPSKQVK (89 aa)) form a disordered region. Positions 36–52 (KKDKKDKKDKKEKKEKK) are enriched in basic residues. Composition is skewed to basic and acidic residues over residues 53–62 (EKKEKNDKKD) and 68–79 (DKKAEQVDKLSE). The Q motif motif lies at 130-156 (LAFNQISLDKEVQNEIAKFPKPTPIQA). The 174-residue stretch at 159 to 332 (WPYLLSGKDV…STFMKEPVKV (174 aa)) folds into the Helicase ATP-binding domain. 172–179 (AETGSGKT) is a binding site for ATP. Residues 279–282 (DEAD) carry the DEAD box motif. The Helicase C-terminal domain maps to 361–510 (KLLDLLKKYQ…PVPEDLIKFG (150 aa)).

The protein belongs to the DEAD box helicase family. DDX5/DBP2 subfamily.

The protein localises to the nucleus. It is found in the nucleolus. The enzyme catalyses ATP + H2O = ADP + phosphate + H(+). ATP-dependent RNA helicase required for 60S ribosomal subunit synthesis. Involved in efficient pre-rRNA processing, predominantly at site A3, which is necessary for the normal formation of 25S and 5.8S rRNAs. The sequence is that of ATP-dependent RNA helicase DBP3 (DBP3) from Candida glabrata (strain ATCC 2001 / BCRC 20586 / JCM 3761 / NBRC 0622 / NRRL Y-65 / CBS 138) (Yeast).